The sequence spans 123 residues: Large ribosomal subunit protein bL12 (123 aa).

The protein belongs to the bacterial ribosomal protein bL12 family. As to quaternary structure, homodimer. Part of the ribosomal stalk of the 50S ribosomal subunit. Forms a multimeric L10(L12)X complex, where L10 forms an elongated spine to which 2 to 4 L12 dimers bind in a sequential fashion. Binds GTP-bound translation factors.

In terms of biological role, forms part of the ribosomal stalk which helps the ribosome interact with GTP-bound translation factors. Is thus essential for accurate translation. This Rhodopseudomonas palustris (strain BisB18) protein is Large ribosomal subunit protein bL12.